The following is a 102-amino-acid chain: Trp operon repressor homolog (102 aa).

The DNA-binding element occupies 59 to 82; that stretch reads QRQISQMLGVGIATITRGSNELKL.

Belongs to the TrpR family. In terms of assembly, homodimer.

Its subcellular location is the cytoplasm. Functionally, this protein is an aporepressor. When complexed with L-tryptophan it binds the operator region of the trp operon and prevents the initiation of transcription. This Vibrio vulnificus (strain CMCP6) protein is Trp operon repressor homolog.